A 356-amino-acid polypeptide reads, in one-letter code: Popeye domain-containing protein 1 (356 aa).

Residues 1 to 48 (MNFTEPSPLAQSTVVGFLPELESLTPVPSNETSCENWREVHHLVFHAA) lie on the Extracellular side of the membrane. 2 N-linked (GlcNAc...) asparagine glycosylation sites follow: asparagine 2 and asparagine 30. A helical membrane pass occupies residues 49 to 69 (NVCFAVGLLIPTTLHLHMILL). A topological domain (cytoplasmic) is located at residue arginine 70. A helical membrane pass occupies residues 71–91 (VMLSIGCTLYVVWATLYRCAL). Residue aspartate 92 is a topological domain, extracellular. Residues 93-113 (MMIWNSVFLGINILHLSYLLY) traverse the membrane as a helical segment. The tract at residues 93–115 (MMIWNSVFLGINILHLSYLLYKK) is required for interaction with CAV3. At 114–356 (KKRPVKIEKD…VPVSPAHQLP (243 aa)) the chain is on the cytoplasmic side. The required for interaction with KCNK2 stretch occupies residues 136-186 (RVPPDLFRRLTGQFCVIQTLKRGQVYATEDKTSVDDRLSILLKGRMKVSYR). Serine 295 and serine 318 each carry phosphoserine. Residues 313-323 (SSSTASLPMSS) show a composition bias toward low complexity. A disordered region spans residues 313–356 (SSSTASLPMSSPQQRASPKMKPIEEGLEDDDEVFVPVSPAHQLP).

Belongs to the popeye family. Homodimer. Homodimerization requires the C-terminus cytoplasmic region. Interacts (via the C-terminus cytoplasmic tail) with TJP1. Interacts (via the C-terminus cytoplasmic tail) with ARHGEF25/GEFT (via the DH domain). Interacts (via the C-terminus cytoplasmic tail) with VAMP3. Interacts with KCNK2; the interaction enhances KCNK2 surface expression and is inhibited by cAMP. Interacts with CAV3. In terms of tissue distribution, strongly expressed in heart and skeletal muscle. Weakly expressed in brain, spleen, liver, kidney and lung.

Its subcellular location is the lateral cell membrane. The protein localises to the cell junction. The protein resides in the tight junction. It is found in the membrane. It localises to the cell membrane. Its subcellular location is the sarcolemma. The protein localises to the caveola. In terms of biological role, cell adhesion molecule involved in the establishment and/or maintenance of cell integrity. Involved in the formation and regulation of the tight junction (TJ) paracellular permeability barrier in epithelial cells. Plays a role in VAMP3-mediated vesicular transport and recycling of different receptor molecules through its interaction with VAMP3. Plays a role in the regulation of cell shape and movement by modulating the Rho-family GTPase activity through its interaction with ARHGEF25/GEFT. Induces primordial adhesive contact and aggregation of epithelial cells in a Ca(2+)-independent manner. Important for skeletal muscle and heart development. Also involved in striated muscle regeneration and repair and in the regulation of cell spreading. Important for the maintenance of cardiac function. Plays a regulatory function in heart rate dynamics mediated, at least in part, through cAMP-binding and, probably, by increasing cell surface expression of the potassium channel KCNK2 and enhancing current density. Is a caveolae-associated protein important for the preservation of caveolae structural and functional integrity as well as for heart protection against ischemia injury. This is Popeye domain-containing protein 1 (Popdc1) from Rattus norvegicus (Rat).